Here is a 67-residue protein sequence, read N- to C-terminus: Large ribosomal subunit protein bL31c (67 aa).

The protein belongs to the bacterial ribosomal protein bL31 family. Type A subfamily. Part of the 50S ribosomal subunit.

The protein localises to the plastid. The protein resides in the chloroplast. Binds the 23S rRNA. This is Large ribosomal subunit protein bL31c (rpl31) from Cyanidioschyzon merolae (strain NIES-3377 / 10D) (Unicellular red alga).